The chain runs to 418 residues: Zinc metalloprotease RasP (418 aa).

The next 4 helical transmembrane spans lie at 5–25 (LAFI…HLYF), 170–190 (MAIF…LLGL), 345–365 (VIFF…MPIP), and 390–410 (EGAI…VVTW). Residue His18 participates in Zn(2+) binding. Residue Glu19 is part of the active site. His22 lines the Zn(2+) pocket. Residues 183 to 267 (GFVILLGLSL…ALQTNATLSQ (85 aa)) enclose the PDZ domain.

This sequence belongs to the peptidase M50B family. Requires Zn(2+) as cofactor.

It localises to the cell membrane. In terms of biological role, is responsible for Site-2 cleavage of the RsiW anti-sigma factor. This results, after a third proteolytic step catalyzed by the ClpXP protease, in the release of SigW and the transcription activation of the genes under the control of the sigma-W factor. In Shouchella clausii (strain KSM-K16) (Alkalihalobacillus clausii), this protein is Zinc metalloprotease RasP (rasP).